Here is a 722-residue protein sequence, read N- to C-terminus: MTMFKKAVKSFQWGNHQVTMETGEIARQSGGAVIVNVDDTVVMGTVVASKSAKPGQSFFPLTVDYLEKTYAAGKIPGGFFRREGRPSEGETLISRLIDRPLRPLFPEGFLNEVQVVIHVLSINPDVPSDIPALIAASAALAISGIPFAGPVGAARVGYANGQYLLNPTRTEQATSELDLIVAGTQAAVLMVESEANQLSEEVMLGAVVYGHDQMQTAINAINELVAEAGKPEWDWTAAPKDEPFIAKVTALAEAPLREAYQIRQKGARSDKLKEITKEVMAKLQEEGDVDAVAVNDILFEIEAKIVRSQILNGEPRIDGRDTRTVRPIEIRNGVLPRTHGSALFTRGETQALVVATLGTARDEQIIDALEGEYRDRFMFHYNMPPFATGETGRVGSPKRREIGHGRLAKRALIPVLPSAEDFAYSIRVVSEITESNGSSSMASVCGGCLAMMDAGVPVKAHVAGVAMGLILDGNRFAVLTDILGDEDHLGDMDFKVAGTANGITALQMDIKVQGITKEIMQVALAQAKEGRLHILSKMQEAMGSVRTELSAHAPRMVSFKIHPDKIREVIGKGGATIQALTKETGCSIDIKDDGTVTIASTSAEGMAEAKARIEGITAEAEVGKIYEGPVVKLLEFGALVNILPGKDGLLHISEISNERVKEVKDYLAEGQVVRVKLLAADERGRLRLSLKAAMADEGGTIAPLAGAAEVVAEEAPASGESA.

Residues D487 and D493 each contribute to the Mg(2+) site. Positions P554 to I613 constitute a KH domain. One can recognise an S1 motif domain in the interval G623–K691.

Belongs to the polyribonucleotide nucleotidyltransferase family. The cofactor is Mg(2+).

It localises to the cytoplasm. The enzyme catalyses RNA(n+1) + phosphate = RNA(n) + a ribonucleoside 5'-diphosphate. Functionally, involved in mRNA degradation. Catalyzes the phosphorolysis of single-stranded polyribonucleotides processively in the 3'- to 5'-direction. This chain is Polyribonucleotide nucleotidyltransferase, found in Polynucleobacter asymbioticus (strain DSM 18221 / CIP 109841 / QLW-P1DMWA-1) (Polynucleobacter necessarius subsp. asymbioticus).